The chain runs to 668 residues: Threonine--tRNA ligase (668 aa).

In terms of domain architecture, TGS spans 1–61 (MSDLKIALTH…ADGDQVEPVA (61 aa)). The catalytic stretch occupies residues 265–564 (DHRKLGRDLD…LVEHYAGAFP (300 aa)). Zn(2+)-binding residues include cysteine 358, histidine 409, and histidine 541.

Belongs to the class-II aminoacyl-tRNA synthetase family. As to quaternary structure, homodimer. It depends on Zn(2+) as a cofactor.

It is found in the cytoplasm. It carries out the reaction tRNA(Thr) + L-threonine + ATP = L-threonyl-tRNA(Thr) + AMP + diphosphate + H(+). In terms of biological role, catalyzes the attachment of threonine to tRNA(Thr) in a two-step reaction: L-threonine is first activated by ATP to form Thr-AMP and then transferred to the acceptor end of tRNA(Thr). Also edits incorrectly charged L-seryl-tRNA(Thr). The chain is Threonine--tRNA ligase from Nocardioides sp. (strain ATCC BAA-499 / JS614).